The chain runs to 446 residues: Phosphoglucosamine mutase (446 aa).

Residue serine 102 is the Phosphoserine intermediate of the active site. The Mg(2+) site is built by serine 102, aspartate 241, aspartate 243, and aspartate 245. Serine 102 bears the Phosphoserine mark.

Belongs to the phosphohexose mutase family. It depends on Mg(2+) as a cofactor. Post-translationally, activated by phosphorylation.

The enzyme catalyses alpha-D-glucosamine 1-phosphate = D-glucosamine 6-phosphate. In terms of biological role, catalyzes the conversion of glucosamine-6-phosphate to glucosamine-1-phosphate. The chain is Phosphoglucosamine mutase from Yersinia pseudotuberculosis serotype O:1b (strain IP 31758).